The following is a 319-amino-acid chain: Cobalamin biosynthesis protein CbiB (319 aa).

5 consecutive transmembrane segments (helical) span residues 56-76, 82-102, 153-173, 204-224, and 296-316; these read VMWV…LALA, WFGW…RSLA, VDGI…LAMA, VANY…AGLC, and LMWV…CGLS.

This sequence belongs to the CobD/CbiB family.

The protein resides in the cell membrane. The protein operates within cofactor biosynthesis; adenosylcobalamin biosynthesis. Its function is as follows. Converts cobyric acid to cobinamide by the addition of aminopropanol on the F carboxylic group. However, the true cosubstrate could be (R)-1-amino-2-propanol O-2-phosphate, leading to cobinamide phosphate. The polypeptide is Cobalamin biosynthesis protein CbiB (Salmonella choleraesuis (strain SC-B67)).